We begin with the raw amino-acid sequence, 443 residues long: Tubulin beta chain (443 aa).

The GTP site is built by Gln11, Glu69, Ser138, Gly142, Thr143, Gly144, Asn204, and Asn226. Mg(2+) is bound at residue Glu69. Residues 424–443 (QYQDASAEEEGEFEGEEEEA) are disordered. Positions 429 to 443 (SAEEEGEFEGEEEEA) are enriched in acidic residues.

It belongs to the tubulin family. As to quaternary structure, dimer of alpha and beta chains. A typical microtubule is a hollow water-filled tube with an outer diameter of 25 nm and an inner diameter of 15 nM. Alpha-beta heterodimers associate head-to-tail to form protofilaments running lengthwise along the microtubule wall with the beta-tubulin subunit facing the microtubule plus end conferring a structural polarity. Microtubules usually have 13 protofilaments but different protofilament numbers can be found in some organisms and specialized cells. Mg(2+) is required as a cofactor.

It localises to the cytoplasm. Its subcellular location is the cytoskeleton. Tubulin is the major constituent of microtubules, a cylinder consisting of laterally associated linear protofilaments composed of alpha- and beta-tubulin heterodimers. Microtubules grow by the addition of GTP-tubulin dimers to the microtubule end, where a stabilizing cap forms. Below the cap, tubulin dimers are in GDP-bound state, owing to GTPase activity of alpha-tubulin. This is Tubulin beta chain (TUBB) from Chlamydomonas incerta.